The chain runs to 725 residues: MSPSPTRLAVRSVDPQKTPNLTSKAPARPSRKSEWVETTAHLRRKPCHSRHNSPAWEISGPPWSSQDHLGPHQASKPSTQRFWSPGPPLARAQAWEPIPPHQKKLCHLSSTSLPRETIASLPCKSQTLRQEVRKHWSPELFPRSPGTSDLKTLASEKTTALPLKNLCHFRSVEKNSGAIAHPQDSRESSHKSALAASSRQSRSRVRSASLPPRTRLPSGSEAPLTDHSARLSDLLLTSHATAPRWRSPDPCLRLAEPPLGSTTTPLSIWTAPQSQVMARPSKSREPQIRASAQRDPQLSEKQPRWKEALPPPLRWKEKSPLRREGTDLPPSLKQWMPSQPLLPKPSLPDLMLELLRIPRCSQIARAMPEKTGQPQERLQISSRILKNSKKPQLSAPILTEGQPQSPQPLLPSPSLKAAEIQPPSQPPRQSLPPRPSLPPGQPLSPRWSPQPRQSLPPWRSLPPGQPLSPPRSPLPGQSPLLEPIRPLEQSLAPQQCQPLLGQLPLGQPMQVHWSGEPGHSQLLPPLGHPFLPAQQLPPGQPLLPAQSLLAGQPLPPPAGPILDPPAPRSRLLTRLLRGLLRGRLPGLTSTSGAEAAAGTRHRLASARSSPPVMSRKKGPPAASSGFCGETAALACPGATRSGATQSATSSPEPSEAASVYPSVPDHDPSAPGRPRILWRRGANRCAKKPLRCESRSAQIRNAASSSTSNWRRRRWTTCVHTACCF.

Disordered stretches follow at residues 1–93 (MSPS…ARAQ), 177–226 (GAIA…PLTD), 256–340 (EPPL…PSQP), 396–481 (PILT…SPLL), 508–528 (PMQV…PLGH), 584–624 (LPGL…AASS), and 638–675 (ATRS…GRPR). A compositionally biased stretch (basic residues) spans 41-51 (HLRRKPCHSRH). Residues 260–276 (GSTTTPLSIWTAPQSQV) show a composition bias toward polar residues. Composition is skewed to basic and acidic residues over residues 297 to 307 (QLSEKQPRWKE) and 314 to 326 (RWKE…REGT). 2 stretches are compositionally biased toward pro residues: residues 423-442 (PSQP…PGQP) and 459-473 (RSLP…PRSP). Low complexity-rich tracts occupy residues 584 to 598 (LPGL…AAAG) and 643 to 658 (ATQS…EAAS).

The protein belongs to the ALEX family. As to quaternary structure, interacts with the N-terminal region of the XLas isoforms of guanine nucleotide-binding protein G(s) subunit alpha.

The protein resides in the cell membrane. The protein localises to the cell projection. It is found in the ruffle. In terms of biological role, may inhibit the adenylyl cyclase-stimulating activity of guanine nucleotide-binding protein G(s) subunit alpha which is produced from the same locus in a different open reading frame. In Mus musculus (Mouse), this protein is Protein ALEX.